Reading from the N-terminus, the 358-residue chain is Ribosomal RNA large subunit methyltransferase M (358 aa).

S-adenosyl-L-methionine-binding positions include serine 191, 224–227, aspartate 243, aspartate 263, and aspartate 279; that span reads APGG. Lysine 308 (proton acceptor) is an active-site residue.

Belongs to the class I-like SAM-binding methyltransferase superfamily. RNA methyltransferase RlmE family. RlmM subfamily. In terms of assembly, monomer.

It is found in the cytoplasm. It catalyses the reaction cytidine(2498) in 23S rRNA + S-adenosyl-L-methionine = 2'-O-methylcytidine(2498) in 23S rRNA + S-adenosyl-L-homocysteine + H(+). Functionally, catalyzes the 2'-O-methylation at nucleotide C2498 in 23S rRNA. The chain is Ribosomal RNA large subunit methyltransferase M from Marinobacter nauticus (strain ATCC 700491 / DSM 11845 / VT8) (Marinobacter aquaeolei).